Consider the following 575-residue polypeptide: Sodium/calcium exchanger NCL2 (575 aa).

3 consecutive transmembrane segments (helical) span residues 69-89, 112-132, and 146-166; these read FLPCTTTAWGNLFLVLAYGFL, IVGGLFLPILGALPDALLILV, and VLIGMGLLAGSTVMLLTLLWG. A glycan (N-linked (GlcNAc...) asparagine) is linked at Asn-179. Helical transmembrane passes span 210 to 230 and 237 to 257; these read IMAISILPFIIVQIPKIFKLH and VLIGLIVAALLLLSYCLYQVF. 2 EF-hand domains span residues 297–332 and 337–372; these read PNVSVIEKLFHRIDQDNDGKLERGELQAFIVGINFE and NSNLAADQVMADFDTSRNHFIEKGEFVNGMLRWLDE. N-linked (GlcNAc...) asparagine glycosylation is present at Asn-298. Residues Asp-310, Asp-312, Asp-314, Lys-316, Glu-321, Asp-350, Ser-352, Asn-354, and Glu-361 each contribute to the Ca(2+) site. The next 5 membrane-spanning stretches (helical) occupy residues 417-437, 457-477, 494-514, 522-542, and 548-568; these read WTCIKAILLLLLGTAMAAASA, FISFIVMPLATNSSEAVSAII, VYGGVTMNNTLCLAVFLALVY, FSSEVLIILLVCIIMGLFTSF, and LWTCFVAFLLYPLSLIMVYIL.

Belongs to the Ca(2+):cation antiporter (CaCA) (TC 2.A.19) family.

It localises to the cell membrane. May function as a sodium/calcium exchanger (NCX) and participate in the maintenance of calcium homeostasis. May play a role abiotic stress responses. The polypeptide is Sodium/calcium exchanger NCL2 (Oryza sativa subsp. japonica (Rice)).